The following is a 124-amino-acid chain: Small ribosomal subunit protein uS12 (124 aa).

D89 carries the 3-methylthioaspartic acid modification.

It belongs to the universal ribosomal protein uS12 family. Part of the 30S ribosomal subunit. Contacts proteins S8 and S17. May interact with IF1 in the 30S initiation complex.

Functionally, with S4 and S5 plays an important role in translational accuracy. Interacts with and stabilizes bases of the 16S rRNA that are involved in tRNA selection in the A site and with the mRNA backbone. Located at the interface of the 30S and 50S subunits, it traverses the body of the 30S subunit contacting proteins on the other side and probably holding the rRNA structure together. The combined cluster of proteins S8, S12 and S17 appears to hold together the shoulder and platform of the 30S subunit. The sequence is that of Small ribosomal subunit protein uS12 from Aeromonas hydrophila subsp. hydrophila (strain ATCC 7966 / DSM 30187 / BCRC 13018 / CCUG 14551 / JCM 1027 / KCTC 2358 / NCIMB 9240 / NCTC 8049).